Consider the following 349-residue polypeptide: MAGIVVRSESAVAVMGAGAWGTALAKVLIDAGGPEAGVVLWARRPDVAERINTTRCNRAYLPGTLLPPGIRATADPADALRGASTVLLGVPAQRMRANLERWGGLVADGATLVSLAKGIELGTLMRMSQVIVSVTGVDPAQVAVLSGPNLASEIAQCQPAATVIACSDLGRAVALQRMLSSGYFRPYTNSDVVGTEIGGVCKNVIALACGMAAGVGFGENTAATIITRGLAEIIRLGMALGAQVTTLAGLAGVGDLVATCTSPHSRNRSLGERLGRGEIMQSILHGMDGSDGGDGYVVEGVTSCASVLALASSYDVEMPLTDAVHRVCHKGLSVEKAMALLLGRSTKSE.

NADPH is bound by residues W20, R43, R44, and K117. Residues K117 and G147 each coordinate sn-glycerol 3-phosphate. A151 contributes to the NADPH binding site. The sn-glycerol 3-phosphate site is built by K202, D255, S265, R266, and N267. K202 serves as the catalytic Proton acceptor. R266 provides a ligand contact to NADPH. NADPH is bound by residues V297 and E299.

Belongs to the NAD-dependent glycerol-3-phosphate dehydrogenase family.

It is found in the cytoplasm. It carries out the reaction sn-glycerol 3-phosphate + NAD(+) = dihydroxyacetone phosphate + NADH + H(+). The catalysed reaction is sn-glycerol 3-phosphate + NADP(+) = dihydroxyacetone phosphate + NADPH + H(+). The protein operates within membrane lipid metabolism; glycerophospholipid metabolism. In terms of biological role, catalyzes the reduction of the glycolytic intermediate dihydroxyacetone phosphate (DHAP) to sn-glycerol 3-phosphate (G3P), the key precursor for phospholipid synthesis. The chain is Glycerol-3-phosphate dehydrogenase [NAD(P)+] from Mycobacterium leprae (strain TN).